A 277-amino-acid polypeptide reads, in one-letter code: UPF0276 protein PSEEN3355 (277 aa).

It belongs to the UPF0276 family.

This chain is UPF0276 protein PSEEN3355, found in Pseudomonas entomophila (strain L48).